The primary structure comprises 438 residues: Ubiquitin carboxyl-terminal hydrolase 27 (438 aa).

The USP domain occupies 78–421 (RGLINLGNTC…EGYLLFYHKQ (344 aa)). C87 functions as the Nucleophile in the catalytic mechanism. H380 acts as the Proton acceptor in catalysis.

It belongs to the peptidase C19 family. As to quaternary structure, interacts with phosphorylated BCL2L11 isoform BIMEL; this interaction leads to BCL2L11 deubiquitination and stabilization.

Its subcellular location is the cytoplasm. The protein localises to the cytosol. It localises to the nucleus. It catalyses the reaction Thiol-dependent hydrolysis of ester, thioester, amide, peptide and isopeptide bonds formed by the C-terminal Gly of ubiquitin (a 76-residue protein attached to proteins as an intracellular targeting signal).. Functionally, deubiquitinase involved in innate antiviral immunity by mediating deubiquitination of CGAS and RIGI. Negatively regulates RIGI by mediating 'Lys-63'-linked deubiquitination of RIGI, inhibiting type I interferon signaling. Also regulates 'Lys-63'-linked ubiquitination level of MDA5/IFIH1. Acts as a positive regulator of the cGAS-STING pathway by catalyzing 'Lys-48'-linked deubiquitination of CGAS, thereby promoting its stabilization. Can reduce the levels of BCL2L11/BIM ubiquitination and stabilize BCL2L11 in response to the RAF-MAPK-degradation signal. By acting on BCL2L11 levels, may counteract the anti-apoptotic effects of MAPK activity. This Mus musculus (Mouse) protein is Ubiquitin carboxyl-terminal hydrolase 27.